The sequence spans 21 residues: Phospholipase A2 crotoxin basic chain (21 aa).

The protein belongs to the phospholipase A2 family. Group II subfamily. The cofactor is Ca(2+). Expressed by the venom gland.

The protein localises to the secreted. It carries out the reaction a 1,2-diacyl-sn-glycero-3-phosphocholine + H2O = a 1-acyl-sn-glycero-3-phosphocholine + a fatty acid + H(+). Snake venom phospholipase A2 (PLA2) that induces a conspicuous local myotoxic effect and moderate footpad edema. In vitro, it shows anticoagulant effects and is not cytotoxic on myoblast but is able to lyse myotubes. PLA2 catalyzes the calcium-dependent hydrolysis of the 2-acyl groups in 3-sn-phosphoglycerides. This is Phospholipase A2 crotoxin basic chain from Crotalus durissus cumanensis (South American rattlesnake).